The primary structure comprises 497 residues: Histone-lysine N-methyltransferase ASHR3 (497 aa).

The PHD-type zinc-finger motif lies at Met-118 to Ala-186. An AWS domain is found at Asp-283 to Lys-326. Residues Lys-326–Arg-443 form the SET domain. Positions Pro-449 to Gly-465 constitute a Post-SET domain.

Belongs to the class V-like SAM-binding methyltransferase superfamily. Histone-lysine methyltransferase family. SET2 subfamily. Interacts with AMS/bHLH21 by its SET domain and PHD finger. In terms of tissue distribution, expressed in roots, flowers and buds, the anther and in stamen filaments.

It is found in the nucleus. The protein localises to the chromosome. It catalyses the reaction L-lysyl-[histone] + S-adenosyl-L-methionine = N(6)-methyl-L-lysyl-[histone] + S-adenosyl-L-homocysteine + H(+). Histone methyltransferase. Involved in stamen development. The polypeptide is Histone-lysine N-methyltransferase ASHR3 (ASHR3) (Arabidopsis thaliana (Mouse-ear cress)).